The following is a 155-amino-acid chain: Ribosome maturation factor RimP (155 aa).

Belongs to the RimP family.

Its subcellular location is the cytoplasm. Required for maturation of 30S ribosomal subunits. The protein is Ribosome maturation factor RimP of Synechococcus sp. (strain CC9605).